Here is a 447-residue protein sequence, read N- to C-terminus: N-succinylarginine dihydrolase (447 aa).

Substrate is bound by residues 19 to 28 (GGLAVGNIAS), Asn110, and 137 to 138 (HR). The active site involves Glu174. Arg213 contacts substrate. His249 is an active-site residue. Substrate contacts are provided by Asp251 and Asn362. Cys368 serves as the catalytic Nucleophile.

It belongs to the succinylarginine dihydrolase family. As to quaternary structure, homodimer.

It carries out the reaction N(2)-succinyl-L-arginine + 2 H2O + 2 H(+) = N(2)-succinyl-L-ornithine + 2 NH4(+) + CO2. It functions in the pathway amino-acid degradation; L-arginine degradation via AST pathway; L-glutamate and succinate from L-arginine: step 2/5. Functionally, catalyzes the hydrolysis of N(2)-succinylarginine into N(2)-succinylornithine, ammonia and CO(2). In Nitrosospira multiformis (strain ATCC 25196 / NCIMB 11849 / C 71), this protein is N-succinylarginine dihydrolase.